We begin with the raw amino-acid sequence, 176 residues long: Ribosome maturation factor RimM (176 aa).

The region spanning 93–170 is the PRC barrel domain; it reads DGEYYHADLI…ELPTEIEGDT (78 aa).

It belongs to the RimM family. Binds ribosomal protein uS19.

Its subcellular location is the cytoplasm. In terms of biological role, an accessory protein needed during the final step in the assembly of 30S ribosomal subunit, possibly for assembly of the head region. Essential for efficient processing of 16S rRNA. May be needed both before and after RbfA during the maturation of 16S rRNA. It has affinity for free ribosomal 30S subunits but not for 70S ribosomes. The sequence is that of Ribosome maturation factor RimM from Rhodopseudomonas palustris (strain BisB5).